We begin with the raw amino-acid sequence, 238 residues long: NADH-quinone oxidoreductase subunit C (238 aa).

Residues 1 to 11 show a composition bias toward polar residues; it reads MSTSNGSANGT. Residues 1 to 20 form a disordered region; sequence MSTSNGSANGTNGVGLPRGD.

It belongs to the complex I 30 kDa subunit family. NDH-1 is composed of 14 different subunits. Subunits NuoB, C, D, E, F, and G constitute the peripheral sector of the complex.

It is found in the cell membrane. The catalysed reaction is a quinone + NADH + 5 H(+)(in) = a quinol + NAD(+) + 4 H(+)(out). NDH-1 shuttles electrons from NADH, via FMN and iron-sulfur (Fe-S) centers, to quinones in the respiratory chain. The immediate electron acceptor for the enzyme in this species is believed to be a menaquinone. Couples the redox reaction to proton translocation (for every two electrons transferred, four hydrogen ions are translocated across the cytoplasmic membrane), and thus conserves the redox energy in a proton gradient. This is NADH-quinone oxidoreductase subunit C from Mycolicibacterium smegmatis (strain ATCC 700084 / mc(2)155) (Mycobacterium smegmatis).